The primary structure comprises 481 residues: Glutamine synthetase (481 aa).

One can recognise a GS beta-grasp domain in the interval 22–106 (NEVEFVDFRF…VFCDVYDVYK (85 aa)). Residues 114-481 (PRSIAKKALK…PFEFITTYSC (368 aa)) form the GS catalytic domain. Mg(2+) contacts are provided by Glu139, Glu141, Glu223, and Glu230. L-glutamate is bound by residues 274-275 (NG) and Gly275. His279 is a binding site for Mg(2+). ATP contacts are provided by residues 281 to 283 (HVS) and Ser283. Residues Arg331, Glu337, and Arg349 each coordinate L-glutamate. Positions 349 and 354 each coordinate ATP. Glu367 is a Mg(2+) binding site. Arg369 provides a ligand contact to L-glutamate.

The protein belongs to the glutamine synthetase family. Oligomer of 12 subunits arranged in the form of two hexameric ring. It depends on Mg(2+) as a cofactor.

The protein resides in the cytoplasm. It catalyses the reaction L-glutamate + NH4(+) + ATP = L-glutamine + ADP + phosphate + H(+). Its activity is regulated as follows. The activity of this enzyme could be controlled by adenylation under conditions of abundant glutamine. Catalyzes the ATP-dependent biosynthesis of glutamine from glutamate and ammonia. This is Glutamine synthetase from Helicobacter pylori (strain J99 / ATCC 700824) (Campylobacter pylori J99).